Reading from the N-terminus, the 232-residue chain is Rho-related GTP-binding protein Rho6 (232 aa).

Residues 23–28 (QCGKTA), 38–45 (YPETYVPT), 67–71 (DTSGS), 125–128 (CKTD), and 169–170 (AF) contribute to the GTP site. An Effector region motif is present at residues 42–50 (YVPTVFENY). A Cysteine methyl ester modification is found at cysteine 229. Cysteine 229 is lipidated: S-geranylgeranyl cysteine. A propeptide spans 230–232 (SIM) (removed in mature form).

This sequence belongs to the small GTPase superfamily. Rho family. As to quaternary structure, binds GRB7 and PLXNB1. Interacts with UBXD5. Interacts with PLXNA2. Mostly expressed in brain and liver.

It is found in the cell membrane. Its subcellular location is the cytoplasm. The protein resides in the cytoskeleton. Lacks intrinsic GTPase activity. Has a low affinity for GDP, and constitutively binds GTP. Controls rearrangements of the actin cytoskeleton. Induces the Rac-dependent neuritic process formation in part by disruption of the cortical actin filaments. Causes the formation of many neuritic processes from the cell body with disruption of the cortical actin filaments. The chain is Rho-related GTP-binding protein Rho6 (RND1) from Homo sapiens (Human).